We begin with the raw amino-acid sequence, 864 residues long: DNA double-strand break repair Rad50 ATPase (864 aa).

ATP is bound by residues 32–38 and Gln131; that span reads NGAGKSS. 2 coiled-coil regions span residues 176–319 and 376–413; these read RELD…EKAI and DIDK…EKNE. A Zinc-hook domain is found at 380 to 478; it reads VNSLEQKVEE…ELNKIEREYR (99 aa). Zn(2+)-binding residues include Cys426 and Cys429. A coiled-coil region spans residues 440 to 697; the sequence is KIIKEAKSYI…DREKIINAIN (258 aa).

It belongs to the SMC family. RAD50 subfamily. In terms of assembly, homodimer. Forms a heterotetramer composed of two Mre11 subunits and two Rad50 subunits. Zn(2+) is required as a cofactor.

Its function is as follows. Part of the Rad50/Mre11 complex, which is involved in the early steps of DNA double-strand break (DSB) repair. The complex may facilitate opening of the processed DNA ends to aid in the recruitment of HerA and NurA. Rad50 controls the balance between DNA end bridging and DNA resection via ATP-dependent structural rearrangements of the Rad50/Mre11 complex. This Saccharolobus solfataricus (strain ATCC 35092 / DSM 1617 / JCM 11322 / P2) (Sulfolobus solfataricus) protein is DNA double-strand break repair Rad50 ATPase.